Consider the following 578-residue polypeptide: Signal peptide peptidase-like 2B (578 aa).

An N-terminal signal peptide occupies residues M1–C19. The Lumenal segment spans residues E20–N168. One can recognise a PA domain in the interval L61–I145. 2 N-linked (GlcNAc...) asparagine glycosylation sites follow: N91 and N123. The helical transmembrane segment at M169–S189 threads the bilayer. Residues H190–P216 are Cytoplasmic-facing. Residues V217–Y237 form a helical membrane-spanning segment. The Lumenal segment spans residues D238–R239. The helical transmembrane segment at L240–L260 threads the bilayer. Topologically, residues A261–P286 are cytoplasmic. The chain crosses the membrane as a helical span at residues Q287 to F307. The Lumenal segment spans residues R308 to Q312. The chain crosses the membrane as a helical span at residues W313–I333. The Cytoplasmic segment spans residues R334–C341. A helical membrane pass occupies residues T342–L362. The active site involves D352. Over T363–R405 the chain is Lumenal. A helical transmembrane segment spans residues P406 to H426. D414 is a catalytic residue. The Cytoplasmic portion of the chain corresponds to R427–Y438. Residues F439–L459 traverse the membrane as a helical segment. Over M460 to G463 the chain is Lumenal. The chain crosses the membrane as a helical span at residues Q464 to W484. A PAL motif is present at residues P465–L467. Topologically, residues R485 to A578 are cytoplasmic. Residues P502–A578 are disordered. Low complexity predominate over residues S520–E529.

This sequence belongs to the peptidase A22B family. In terms of assembly, monomer. Homodimer. Interacts with ITM2B and TNF. Glycosylated.

The protein resides in the cell membrane. It is found in the golgi apparatus membrane. The protein localises to the lysosome membrane. Its subcellular location is the endosome membrane. It localises to the membrane. Its function is as follows. Intramembrane-cleaving aspartic protease (I-CLiP) that cleaves type II membrane signal peptides in the hydrophobic plane of the membrane. Functions in ITM2B and TNF processing. Catalyzes the intramembrane cleavage of the anchored fragment of shed TNF-alpha (TNF), which promotes the release of the intracellular domain (ICD) for signaling to the nucleus. May play a role in the regulation of innate and adaptive immunity. The polypeptide is Signal peptide peptidase-like 2B (Mus musculus (Mouse)).